An 89-amino-acid chain; its full sequence is Small ribosomal subunit protein uS15 (89 aa).

This sequence belongs to the universal ribosomal protein uS15 family. As to quaternary structure, part of the 30S ribosomal subunit. Forms a bridge to the 50S subunit in the 70S ribosome, contacting the 23S rRNA.

Functionally, one of the primary rRNA binding proteins, it binds directly to 16S rRNA where it helps nucleate assembly of the platform of the 30S subunit by binding and bridging several RNA helices of the 16S rRNA. Its function is as follows. Forms an intersubunit bridge (bridge B4) with the 23S rRNA of the 50S subunit in the ribosome. The protein is Small ribosomal subunit protein uS15 of Baumannia cicadellinicola subsp. Homalodisca coagulata.